Here is a 247-residue protein sequence, read N- to C-terminus: Cell division protein ZapD (247 aa).

The protein belongs to the ZapD family. In terms of assembly, interacts with FtsZ.

Its subcellular location is the cytoplasm. Its function is as follows. Cell division factor that enhances FtsZ-ring assembly. Directly interacts with FtsZ and promotes bundling of FtsZ protofilaments, with a reduction in FtsZ GTPase activity. In Shigella sonnei (strain Ss046), this protein is Cell division protein ZapD.